A 514-amino-acid polypeptide reads, in one-letter code: Putative thymidine phosphorylase (514 aa).

It belongs to the thymidine/pyrimidine-nucleoside phosphorylase family. Type 2 subfamily.

The catalysed reaction is thymidine + phosphate = 2-deoxy-alpha-D-ribose 1-phosphate + thymine. This is Putative thymidine phosphorylase from Rhodopseudomonas palustris (strain ATCC BAA-98 / CGA009).